We begin with the raw amino-acid sequence, 177 residues long: Thymidine kinase (177 aa).

Residue 11-18 coordinates ATP; it reads GPMFSGKS. E83 acts as the Proton acceptor in catalysis. Residue F113 coordinates substrate. The Zn(2+) site is built by C138 and C141. Residue 157-161 participates in substrate binding; it reads IEIIG. Residues C170 and C173 each contribute to the Zn(2+) site.

The protein belongs to the thymidine kinase family. In terms of assembly, homotetramer. Two molecules of substrate bind to each enzyme tetramer.

It carries out the reaction thymidine + ATP = dTMP + ADP + H(+). Phosphorylates thymidine and thymidine analogs, such as azidothymidine (AZT). Part of the salvage pathway for pyrimidine deoxyribonucleotide synthesis. The protein is Thymidine kinase (OPG101) of Variola virus (isolate Human/India/Ind3/1967) (VARV).